A 440-amino-acid polypeptide reads, in one-letter code: Glyceraldehyde-3-phosphate dehydrogenase, testis-specific (440 aa).

The interval 1-105 (MSRRDVVLTN…PPPPPLQKPA (105 aa)) is testis-specific N-terminal extension. Composition is skewed to pro residues over residues 40-75 (PPKLEDPPPTVEEQPPPPPPPPPPPPPPPPPPPPQI) and 83-102 (APPPPPPPPPPPPPPPPPLQ). The interval 40–106 (PPKLEDPPPT…PPPPLQKPAR (67 aa)) is disordered. NAD(+)-binding positions include 117–118 (RI), D138, K183, Y205, and T225. D-glyceraldehyde 3-phosphate is bound by residues 255–257 (SCT), T286, 315–316 (TG), and R338. Catalysis depends on C256, which acts as the Nucleophile. S358 carries the phosphoserine modification. N420 provides a ligand contact to NAD(+).

This sequence belongs to the glyceraldehyde-3-phosphate dehydrogenase family. Homotetramer. Testis specific.

It is found in the cytoplasm. It carries out the reaction D-glyceraldehyde 3-phosphate + phosphate + NAD(+) = (2R)-3-phospho-glyceroyl phosphate + NADH + H(+). It functions in the pathway carbohydrate degradation; glycolysis; pyruvate from D-glyceraldehyde 3-phosphate: step 1/5. Functionally, may play an important role in regulating the switch between different pathways for energy production during spermiogenesis and in the spermatozoon. Required for sperm motility and male fertility. This is Glyceraldehyde-3-phosphate dehydrogenase, testis-specific (Gapdhs) from Mus musculus (Mouse).